The sequence spans 115 residues: Nucleoid-associated protein P9211_00201 (115 aa).

Belongs to the YbaB/EbfC family. Homodimer.

It is found in the cytoplasm. The protein resides in the nucleoid. In terms of biological role, binds to DNA and alters its conformation. May be involved in regulation of gene expression, nucleoid organization and DNA protection. The polypeptide is Nucleoid-associated protein P9211_00201 (Prochlorococcus marinus (strain MIT 9211)).